A 269-amino-acid chain; its full sequence is Cytochrome c oxidase subunit 3 (269 aa).

A run of 7 helical transmembrane segments spans residues 24 to 44 (FYNS…MHGF), 46 to 66 (NMYI…TLWF), 90 to 110 (GVGL…WTFF), 132 to 152 (IDPF…GVTV), 167 to 187 (ALYG…FQGI), 207 to 227 (FSTG…SVGL), and 247 to 267 (ILYW…IYFW).

Belongs to the cytochrome c oxidase subunit 3 family. In terms of assembly, component of the cytochrome c oxidase (complex IV, CIV), a multisubunit enzyme composed of a catalytic core of 3 subunits and several supernumerary subunits. The complex exists as a monomer or a dimer and forms supercomplexes (SCs) in the inner mitochondrial membrane with ubiquinol-cytochrome c oxidoreductase (cytochrome b-c1 complex, complex III, CIII).

It localises to the mitochondrion inner membrane. The enzyme catalyses 4 Fe(II)-[cytochrome c] + O2 + 8 H(+)(in) = 4 Fe(III)-[cytochrome c] + 2 H2O + 4 H(+)(out). In terms of biological role, component of the cytochrome c oxidase, the last enzyme in the mitochondrial electron transport chain which drives oxidative phosphorylation. The respiratory chain contains 3 multisubunit complexes succinate dehydrogenase (complex II, CII), ubiquinol-cytochrome c oxidoreductase (cytochrome b-c1 complex, complex III, CIII) and cytochrome c oxidase (complex IV, CIV), that cooperate to transfer electrons derived from NADH and succinate to molecular oxygen, creating an electrochemical gradient over the inner membrane that drives transmembrane transport and the ATP synthase. Cytochrome c oxidase is the component of the respiratory chain that catalyzes the reduction of oxygen to water. Electrons originating from reduced cytochrome c in the intermembrane space (IMS) are transferred via the dinuclear copper A center (CU(A)) of subunit 2 and heme A of subunit 1 to the active site in subunit 1, a binuclear center (BNC) formed by heme A3 and copper B (CU(B)). The BNC reduces molecular oxygen to 2 water molecules using 4 electrons from cytochrome c in the IMS and 4 protons from the mitochondrial matrix. The polypeptide is Cytochrome c oxidase subunit 3 (COXIII) (Trichophyton rubrum (Athlete's foot fungus)).